The sequence spans 850 residues: Vacuolar membrane protease (850 aa).

Over 1–20 (MASSRAQWFNPIAFTPWPVT) the chain is Cytoplasmic. A helical transmembrane segment spans residues 21–41 (CITTIVYLALLIPILVINLVV). Topologically, residues 42–282 (PSAPETNPKG…DGKSKDQNKV (241 aa)) are vacuolar. 3 N-linked (GlcNAc...) asparagine glycosylation sites follow: N53, N116, and N119. Residues H175 and D187 each coordinate Zn(2+). Catalysis depends on E221, which acts as the Proton acceptor. E222 contributes to the Zn(2+) binding site. A helical membrane pass occupies residues 283–303 (NSGTGTLGVWFDMFGTAFAVF). Over 304–308 (RLHTL) the chain is Cytoplasmic. The chain crosses the membrane as a helical span at residues 309–329 (FAISVALLVIAPLVIFVTSVI). Topologically, residues 330-363 (LSKTDRMYLFSMSKSLEGTGDQVSLRGLRGFSRT) are vacuolar. A helical membrane pass occupies residues 364–384 (PIILVIATTIPICLAYLLEKV). Residues 385-393 (NPYIVHSSQ) are Cytoplasmic-facing. A helical transmembrane segment spans residues 394–414 (FSVWSMMFSAWIFLAWFLACA). Residues 415 to 425 (ADFFRPSALHR) are Vacuolar-facing. A helical transmembrane segment spans residues 426-446 (AYSYTWIFIATWIMLVINTVY). Over 447-529 (ANQKGIAAGP…TLPRWTWVLQ (83 aa)) the chain is Cytoplasmic. Residues 530-550 (LLLLAPIVLILVGQLALFLTA) traverse the membrane as a helical segment. The Vacuolar portion of the chain corresponds to 551-563 (SMCQVGSDGVSTF). Residues 564 to 584 (VVYLACSVFTTLLCIPLFPLI) form a helical membrane-spanning segment. At 585 to 590 (HRFTYH) the chain is on the cytoplasmic side. A helical membrane pass occupies residues 591 to 611 (IPTFLFLVFIGTLIYNLVAFP). At 612 to 850 (FSPANRLKTF…VEASHSFTIQ (239 aa)) the chain is on the vacuolar side. Residues N630, N658, and N702 are each glycosylated (N-linked (GlcNAc...) asparagine).

Belongs to the peptidase M28 family. The cofactor is Zn(2+).

Its subcellular location is the vacuole membrane. Its function is as follows. May be involved in vacuolar sorting and osmoregulation. The protein is Vacuolar membrane protease of Ajellomyces capsulatus (strain NAm1 / WU24) (Darling's disease fungus).